The sequence spans 175 residues: Bifunctional protein PyrR (175 aa).

Substrate is bound by residues 40–41, 102–110, arginine 135, and valine 159; these read TR and DDVLYTGRT. The PRPP-binding motif lies at 98 to 110; sequence VVIIDDVLYTGRT.

Belongs to the purine/pyrimidine phosphoribosyltransferase family. PyrR subfamily. Homodimer and homohexamer; in equilibrium.

The enzyme catalyses UMP + diphosphate = 5-phospho-alpha-D-ribose 1-diphosphate + uracil. In terms of biological role, regulates transcriptional attenuation of the pyrimidine nucleotide (pyr) operon by binding in a uridine-dependent manner to specific sites on pyr mRNA. This disrupts an antiterminator hairpin in the RNA and favors formation of a downstream transcription terminator, leading to a reduced expression of downstream genes. Also displays a weak uracil phosphoribosyltransferase activity which is not physiologically significant. The sequence is that of Bifunctional protein PyrR from Staphylococcus epidermidis (strain ATCC 12228 / FDA PCI 1200).